The sequence spans 269 residues: Serine/threonine-protein kinase ZRK7 (269 aa).

Positions 80–269 (FDWSYAIGVD…KNRLMVTVIT (190 aa)) constitute a Protein kinase domain. ATP is bound by residues 86–94 (IGVDRFVWY) and lysine 106. The active-site Proton acceptor is the aspartate 205.

This sequence belongs to the protein kinase superfamily. Ser/Thr protein kinase family. ZRK subfamily.

It carries out the reaction L-seryl-[protein] + ATP = O-phospho-L-seryl-[protein] + ADP + H(+). It catalyses the reaction L-threonyl-[protein] + ATP = O-phospho-L-threonyl-[protein] + ADP + H(+). This is Serine/threonine-protein kinase ZRK7 from Arabidopsis thaliana (Mouse-ear cress).